A 355-amino-acid polypeptide reads, in one-letter code: Peptide chain release factor 1 (355 aa).

At Gln233 the chain carries N5-methylglutamine.

It belongs to the prokaryotic/mitochondrial release factor family. Methylated by PrmC. Methylation increases the termination efficiency of RF1.

The protein resides in the cytoplasm. Its function is as follows. Peptide chain release factor 1 directs the termination of translation in response to the peptide chain termination codons UAG and UAA. This Caldicellulosiruptor bescii (strain ATCC BAA-1888 / DSM 6725 / KCTC 15123 / Z-1320) (Anaerocellum thermophilum) protein is Peptide chain release factor 1.